We begin with the raw amino-acid sequence, 168 residues long: Dihydrofolate reductase (168 aa).

One can recognise a DHFR domain in the interval Met-1–Lys-159. Ile-5 to Ala-7 provides a ligand contact to substrate. Residues Phe-6 to Ala-7 and Ile-14 to Asp-19 contribute to the NADP(+) site. Asp-27 is a binding site for substrate. Residue Gly-43–Thr-46 participates in NADP(+) binding. Arg-57 contacts substrate. NADP(+)-binding positions include Val-62–Ala-65 and Ile-95–Leu-100. Residue Thr-114 participates in substrate binding.

The protein belongs to the dihydrofolate reductase family.

The enzyme catalyses (6S)-5,6,7,8-tetrahydrofolate + NADP(+) = 7,8-dihydrofolate + NADPH + H(+). It participates in cofactor biosynthesis; tetrahydrofolate biosynthesis; 5,6,7,8-tetrahydrofolate from 7,8-dihydrofolate: step 1/1. Functionally, key enzyme in folate metabolism. Catalyzes an essential reaction for de novo glycine and purine synthesis, and for DNA precursor synthesis. This chain is Dihydrofolate reductase (dfrA), found in Bacillus subtilis (strain 168).